The primary structure comprises 219 residues: MKVVLSLGGSVLSNESEKIREFAKTIESVAQQNQVFVVVGGGKLAREYIKRARELGASETFCDYIGIAATRLNAMLLISAIPSAAKKVPVDFMEAEELSKLYRVVVMGGTFPGHTTDATAALLAEFIKADVFINATNVDGVYSADPKSDTSAVKYDRLSPQQLVEIVSRSSAKAGTNVVIDLLAAKIIERSKIKTYVILGTPENIMKAVKGEAVGTVIA.

ATP is bound at residue 9–10 (GS). Residue Gly-41 coordinates UMP. Positions 42 and 46 each coordinate ATP. Residues Asp-63 and 110–116 (TFPGHTT) each bind UMP. 4 residues coordinate ATP: Thr-136, Asn-137, Tyr-142, and Asp-145.

The protein belongs to the UMP kinase family. Homohexamer.

The protein resides in the cytoplasm. The catalysed reaction is UMP + ATP = UDP + ADP. It functions in the pathway pyrimidine metabolism; CTP biosynthesis via de novo pathway; UDP from UMP (UMPK route): step 1/1. With respect to regulation, inhibited by UTP. Catalyzes the reversible phosphorylation of UMP to UDP. The sequence is that of Uridylate kinase from Archaeoglobus fulgidus (strain ATCC 49558 / DSM 4304 / JCM 9628 / NBRC 100126 / VC-16).